We begin with the raw amino-acid sequence, 384 residues long: Lipid-A-disaccharide synthase (384 aa).

This sequence belongs to the LpxB family.

It carries out the reaction a lipid X + a UDP-2-N,3-O-bis[(3R)-3-hydroxyacyl]-alpha-D-glucosamine = a lipid A disaccharide + UDP + H(+). It participates in bacterial outer membrane biogenesis; LPS lipid A biosynthesis. Its function is as follows. Condensation of UDP-2,3-diacylglucosamine and 2,3-diacylglucosamine-1-phosphate to form lipid A disaccharide, a precursor of lipid A, a phosphorylated glycolipid that anchors the lipopolysaccharide to the outer membrane of the cell. This chain is Lipid-A-disaccharide synthase, found in Gloeothece citriformis (strain PCC 7424) (Cyanothece sp. (strain PCC 7424)).